Here is a 594-residue protein sequence, read N- to C-terminus: Zinc finger protein 467 (594 aa).

The interval 1 to 86 (MRETLEALNS…PQKAEPAGSV (86 aa)) is disordered. The tract at residues 1 to 183 (MRETLEALNS…TLRLHQRLHR (183 aa)) is interaction with STAT3. The span at 31–47 (SNAQEKMSSRGESTLHS) shows a compositional bias: polar residues. Over residues 54–64 (PGQKEGIHTEQ) the composition is skewed to basic and acidic residues. A Glycyl lysine isopeptide (Lys-Gly) (interchain with G-Cter in SUMO2) cross-link involves residue K97. C2H2-type zinc fingers lie at residues 160–182 (YGCE…QRLH), 188–210 (CACP…QRSH), 216–238 (FPCS…LRTH), 244–266 (YPCA…QKTH), 272–294 (FPCT…QRIH), 300–322 (YQCT…QRVH), 355–377 (FACS…QSLH), 430–452 (FFCP…RRVH), 458–480 (FACA…SRAH), 486–508 (FACA…QAVH), 514–536 (HACA…QAIH), and 542–564 (FSCP…QRIH). The disordered stretch occupies residues 313-351 (QHLVRHQRVHDAASRTRSSPDIPVAPHSPTASLTPSPPG). A Glycyl lysine isopeptide (Lys-Gly) (interchain with G-Cter in SUMO2) cross-link involves residue K368.

It belongs to the krueppel C2H2-type zinc-finger protein family. Interacts with STAT3. Enhances STAT3 activity by keeping it in the nucleus.

It is found in the nucleus. Its function is as follows. Transcription factor that promotes adipocyte differentiation and suppresses osteoblast differentiation in the bone marrow. Enhances the osteoclast-supporting ability of stromal cells. Binds with STAT3 the consensus sequence 5'-CTTCTGGGAAGA-3' of the acute phase response element (APRE). Transactivates several promoters including FOS, OSM and PPARG. Recruits a histone deacetylase complex. The sequence is that of Zinc finger protein 467 (Znf467) from Mus musculus (Mouse).